A 58-amino-acid polypeptide reads, in one-letter code: uncharacterized protein (58 aa).

This is an uncharacterized protein from Sinorhizobium fredii (strain NBRC 101917 / NGR234).